The primary structure comprises 187 residues: Ribosome-recycling factor (187 aa).

It belongs to the RRF family.

It localises to the cytoplasm. In terms of biological role, responsible for the release of ribosomes from messenger RNA at the termination of protein biosynthesis. May increase the efficiency of translation by recycling ribosomes from one round of translation to another. The chain is Ribosome-recycling factor from Nitrosococcus oceani (strain ATCC 19707 / BCRC 17464 / JCM 30415 / NCIMB 11848 / C-107).